The sequence spans 121 residues: SVIELGKMIIQLTNKTPASYVSYGCFCGGGDKGKPKDATDRCCFVHSCCYDTLPDCSPKTDQYKYKWENGEIICENSTSCKKRICECDKAVAICLRDNLNTYNKKYRIYPNFLCRGDPDKC.

Intrachain disulfides connect Cys25-Cys114, Cys27-Cys43, Cys42-Cys94, Cys48-Cys121, Cys49-Cys87, Cys56-Cys80, and Cys74-Cys85. The tract at residues 104-116 (KKYRIYPNFLCRG) is important for membrane-damaging activities in eukaryotes and bacteria; heparin-binding.

This sequence belongs to the phospholipase A2 family. Group II subfamily. S49 sub-subfamily. Monomer. In terms of tissue distribution, expressed by the venom gland.

It localises to the secreted. Snake venom phospholipase A2 homolog that lacks enzymatic activity. Shows high myotoxin activities and displays edema-inducing activities. Has cytotoxic activities against HUVEC cells (LC(50)=2.5 uL) and human lung adenocarcinoma A549 cells (LC(50)=2.9 uL). In Echis pyramidum leakeyi (Leakey's carpet viper), this protein is Phospholipase A2 homolog EPL_00195.